The following is a 196-amino-acid chain: Large ribosomal subunit protein mL66 (196 aa).

The transit peptide at 1-34 directs the protein to the mitochondrion; that stretch reads MAALKALVSGCGRLLRGLLAGPAATSWSRLPARG.

The protein belongs to the bacterial ribosomal protein bS18 family. Mitochondrion-specific ribosomal protein mL66 subfamily. As to quaternary structure, component of the mitochondrial large ribosomal subunit (mt-LSU). Mature mammalian 55S mitochondrial ribosomes consist of a small (28S) and a large (39S) subunit. The 28S small subunit contains a 12S ribosomal RNA (12S mt-rRNA) and 30 different proteins. The 39S large subunit contains a 16S rRNA (16S mt-rRNA), a copy of mitochondrial valine transfer RNA (mt-tRNA(Val)), which plays an integral structural role, and 52 different proteins. mL66 forms a zinc-binding site with uL10m.

It localises to the mitochondrion. This chain is Large ribosomal subunit protein mL66 (MRPS18A), found in Homo sapiens (Human).